The following is a 520-amino-acid chain: Beta-glucosidase 45 (520 aa).

The signal sequence occupies residues methionine 1–glycine 22. An N-linked (GlcNAc...) asparagine glycan is attached at asparagine 3. A beta-D-glucoside-binding positions include glutamine 52, histidine 155, and asparagine 200–glutamate 201. Glutamate 201 serves as the catalytic Proton donor. A disulfide bridge links cysteine 220 with cysteine 227. N-linked (GlcNAc...) asparagine glycosylation is present at asparagine 226. Tyrosine 344 contacts a beta-D-glucoside. Cysteines 352 and 357 form a disulfide. Asparagine 378 carries N-linked (GlcNAc...) asparagine glycosylation. Glutamate 417 serves as a coordination point for a beta-D-glucoside. Glutamate 417 (nucleophile) is an active-site residue. N-linked (GlcNAc...) asparagine glycosylation occurs at asparagine 435. Residues tryptophan 466, glutamate 473 to tryptophan 474, and phenylalanine 482 each bind a beta-D-glucoside.

It belongs to the glycosyl hydrolase 1 family. In terms of tissue distribution, expressed in stems and siliques.

It carries out the reaction Hydrolysis of terminal, non-reducing beta-D-glucosyl residues with release of beta-D-glucose.. Its function is as follows. Hydrolyzes p-nitrophenyl beta-D-glucoside and natural glucosides such as syringin, coniferin and p-coumaryl alcohol glucoside. May be involved in lignification by hydrolyzing monolignol glucosides. This is Beta-glucosidase 45 from Arabidopsis thaliana (Mouse-ear cress).